Reading from the N-terminus, the 217-residue chain is Deoxyribose-phosphate aldolase (217 aa).

D90 (proton donor/acceptor) is an active-site residue. The active-site Schiff-base intermediate with acetaldehyde is K152. The active-site Proton donor/acceptor is K181.

Belongs to the DeoC/FbaB aldolase family. DeoC type 1 subfamily.

It localises to the cytoplasm. It carries out the reaction 2-deoxy-D-ribose 5-phosphate = D-glyceraldehyde 3-phosphate + acetaldehyde. The protein operates within carbohydrate degradation; 2-deoxy-D-ribose 1-phosphate degradation; D-glyceraldehyde 3-phosphate and acetaldehyde from 2-deoxy-alpha-D-ribose 1-phosphate: step 2/2. In terms of biological role, catalyzes a reversible aldol reaction between acetaldehyde and D-glyceraldehyde 3-phosphate to generate 2-deoxy-D-ribose 5-phosphate. The protein is Deoxyribose-phosphate aldolase of Metamycoplasma hominis (Mycoplasma hominis).